We begin with the raw amino-acid sequence, 284 residues long: Bifunctional protein FolD (284 aa).

166 to 168 (GAS) contacts NADP(+).

Belongs to the tetrahydrofolate dehydrogenase/cyclohydrolase family. In terms of assembly, homodimer.

It catalyses the reaction (6R)-5,10-methylene-5,6,7,8-tetrahydrofolate + NADP(+) = (6R)-5,10-methenyltetrahydrofolate + NADPH. It carries out the reaction (6R)-5,10-methenyltetrahydrofolate + H2O = (6R)-10-formyltetrahydrofolate + H(+). It participates in one-carbon metabolism; tetrahydrofolate interconversion. Functionally, catalyzes the oxidation of 5,10-methylenetetrahydrofolate to 5,10-methenyltetrahydrofolate and then the hydrolysis of 5,10-methenyltetrahydrofolate to 10-formyltetrahydrofolate. The polypeptide is Bifunctional protein FolD (Legionella pneumophila (strain Corby)).